Here is a 287-residue protein sequence, read N- to C-terminus: MLFMKMDLLNYQYLDKMNNNIGVLCYEGEASLRGEPRMQTLPVASALSSHRTGPPPISPSKRKFSMEPGDKDLDCENDHVSKMSRIFSPHLNKTVNGDCRRDPRERSRSPIERAAAPAVSLHGGHLYASLPSLMEQPLALTKNSSDTGRSAVERQQNRPSVITCASAGARNCNLSHCPIAHSGCSAPGSASYRRPPSATATCDPVVEEHFRRSLGKNYKEPEPAPNSVSITGSVDDHFAKALGDTWLQIKAAKDSASSSPESASRRGQPASPTAHMVSHSHSPSVVS.

2 disordered regions span residues 44 to 68 (ASAL…SMEP) and 251 to 287 (AAKD…SVVS). 2 positions are modified to phosphoserine: Ser58 and Ser271. Over residues 275 to 287 (HMVSHSHSPSVVS) the composition is skewed to low complexity.

Belongs to the vestigial family. As to quaternary structure, interacts with TEFs. Interacts with IRF2BP2.

It localises to the nucleus. May act as a specific coactivator for the mammalian TEFs. This Mus musculus (Mouse) protein is Transcription cofactor vestigial-like protein 4 (Vgll4).